The sequence spans 339 residues: Glyceraldehyde-3-phosphate dehydrogenase (339 aa).

Residues 13–14 (RI), aspartate 35, and lysine 84 contribute to the NAD(+) site. D-glyceraldehyde 3-phosphate is bound by residues 156 to 158 (SCT), threonine 187, 216 to 217 (TG), and arginine 239. The Nucleophile role is filled by cysteine 157. Asparagine 321 lines the NAD(+) pocket.

This sequence belongs to the glyceraldehyde-3-phosphate dehydrogenase family. Homotetramer.

Its subcellular location is the cytoplasm. The catalysed reaction is D-glyceraldehyde 3-phosphate + phosphate + NAD(+) = (2R)-3-phospho-glyceroyl phosphate + NADH + H(+). Its pathway is carbohydrate degradation; glycolysis; pyruvate from D-glyceraldehyde 3-phosphate: step 1/5. The polypeptide is Glyceraldehyde-3-phosphate dehydrogenase (Onchocerca volvulus).